Here is a 993-residue protein sequence, read N- to C-terminus: Signal peptide, CUB and EGF-like domain-containing protein 3 (993 aa).

A signal peptide spans 1-20; that stretch reads MGSGRVPGLCLLLLLVHARA. An EGF-like 1; calcium-binding domain is found at 29 to 69; that stretch reads DVDECVEGTDNCHIDAICQNTPRSYKCICKSGYTGDGKHCK. 26 disulfide bridges follow: cysteine 33/cysteine 46, cysteine 40/cysteine 55, cysteine 57/cysteine 68, cysteine 74/cysteine 86, cysteine 82/cysteine 95, cysteine 97/cysteine 110, cysteine 116/cysteine 127, cysteine 123/cysteine 136, cysteine 161/cysteine 172, cysteine 168/cysteine 182, cysteine 184/cysteine 197, cysteine 201/cysteine 212, cysteine 208/cysteine 221, cysteine 223/cysteine 236, cysteine 240/cysteine 251, cysteine 247/cysteine 260, cysteine 262/cysteine 275, cysteine 281/cysteine 292, cysteine 288/cysteine 301, cysteine 303/cysteine 316, cysteine 322/cysteine 332, cysteine 328/cysteine 341, cysteine 343/cysteine 355, cysteine 361/cysteine 372, cysteine 368/cysteine 381, and cysteine 383/cysteine 397. In terms of domain architecture, EGF-like 2; calcium-binding spans 70–111; sequence DVDECEREDNAGCVHDCVNIPGNYRCTCYDGFHLAHDGHNCL. The 37-residue stretch at 112–148 folds into the EGF-like 3; calcium-binding domain; that stretch reads DVDECAEGNGGCQQSCVNMMGSYECHCRDGFFLSDNQ. 3 EGF-like domains span residues 157–198, 199–237, and 238–276; these read EGMN…RDCK, LTCN…KTCI, and ETCA…KTCK. In terms of domain architecture, EGF-like 7; calcium-binding spans 277–317; sequence DIDECRLNNGGCDHICRNTVGSFECSCKKGYKLLINERSCQ. The 39-residue stretch at 318-356 folds into the EGF-like 8; calcium-binding domain; that stretch reads DIDECSFDRTCDHMCVNTPGSFQCLCHRGYLLYGVTHCG. One can recognise an EGF-like 9; calcium-binding domain in the interval 357-398; that stretch reads DVDECSINKGGCRFGCINTPGSYQCTCPAGQGRLHWNGKDCT. N-linked (GlcNAc...) asparagine glycosylation is found at asparagine 417, asparagine 464, asparagine 685, asparagine 756, and asparagine 785. Cystine bridges form between cysteine 804–cysteine 830 and cysteine 857–cysteine 878. One can recognise a CUB domain in the interval 804–916; sequence CGGELGEFTG…RGFQIPYVTY (113 aa).

In terms of assembly, forms homooligomers. Forms heterooligomers with SCUBE1 and SCUBE2. Interacts with TGFBR2 through the CUB domain; this interaction does not affect TGFB1-binding to TGFBR2. Interacts with BMP2, BMP4 and BMP7; the interaction is mediated by the CUB domain. Interacts with BMPR1A, BMPR1B and BMPR2; the interaction with BMPR1A and BMPR1B is BMP2- and BMP4-dependent. Post-translationally, N-glycosylated. Proteolytic cleavage produces a CUB-containing C-terminal fragment that retains the ability to bind to TGFBR2. This reaction is catalyzed in vitro by MMP2 and, to a lesser extent, by MMP9. As to expression, highly expressed in femur and humerus with little or no expression in non-bone tissues.

The protein localises to the secreted. Its subcellular location is the cell surface. In terms of biological role, is a positive regulator of the BMP signaling pathway, required for proper chondrogenesis, osteogenesis and skeletal development. It acts as a coreceptor for BMP ligands, particularly BMP2 and BMP4, facilitating their interactions with BMP type I receptors. It is required for ligand-induced recruitment of BMP receptors to lipid rafts. Binds to TGFBR2 and activates TGFB signaling. The chain is Signal peptide, CUB and EGF-like domain-containing protein 3 from Mus musculus (Mouse).